The chain runs to 273 residues: 3-((Z)-2-isocyanoethenyl)-1H-indole synthase (273 aa).

Fe cation is bound by residues histidine 105, aspartate 107, and histidine 254.

It belongs to the TfdA dioxygenase family. It depends on Fe(2+) as a cofactor.

It carries out the reaction (2S)-3-(1H-indol-3-yl)-2-isocyanopropanoate + 2-oxoglutarate + O2 + H(+) = 3-[(Z)-2-isocyanoethenyl]-1H-indole + succinate + 2 CO2 + H2O. In terms of biological role, involved in the biosynthesis of ambiguines, a family of hapalindole-type alkaloids. Responsible for the synthesis of Z-3-(2-isocyanoethen)-indole, a biosynthetic precursor to all ambiguines. The polypeptide is 3-((Z)-2-isocyanoethenyl)-1H-indole synthase (Fischerella ambigua (strain UTEX 1903)).